We begin with the raw amino-acid sequence, 63 residues long: MAKPGARIIITLECTECRTNTAKRRPGVSRYTTTKNKRNTTGRMELKKFCPNCNKHTVHKETK.

Belongs to the bacterial ribosomal protein bL33 family.

This chain is Large ribosomal subunit protein bL33, found in Gloeobacter violaceus (strain ATCC 29082 / PCC 7421).